The following is a 517-amino-acid chain: MAKTNLNDFDKIIVLDFGSQYNQLITRRIRDFGIYSELLPHDLSIEKIKEMAPKGIIFSGGPNSVYDKGALKVDPEIFKLGIPILGICYGMQLMSYDLGGKVEKADNSEYGRADIEVIDPNAVLFEGLPREQYVWMSHGDLVTKAPEGFTITAKSKNCPISAIANDEKKFYGIQFHAEVRNSEYGLDILKNFAFKVCGAKANWTMDDFIEMQVDEIRKKVGDKKVILGLSGGVDSSVTATLLHKAIGDQLTAIFVDHGMLRKDEGDQVMQALNKDLGVNIIRVNAQERFLNKLKGVTDPEQKRKIIGKEFIEVFNEEAKKLKDVDFLAQGTLYTDVIESGTNTAQTIKSHHNVGGLPEDMHFELIEPLRKLFKDEVRELGEKLGIPHDLVWRQPFPGPGLGIRVIGEVTEDKLKIVRESDAILREEIKNAGLQEDIWQYFTVLPGIRSVGVMGDGRTYDYTIGIRAVTSIDGMTADFAQIPWDVLSKISTRIVDECDHINRVVYDITSKPPSTIEWE.

Residues Lys-11–Asn-202 enclose the Glutamine amidotransferase type-1 domain. Cys-88 serves as the catalytic Nucleophile. Residues His-176 and Glu-178 contribute to the active site. Residues Trp-203–Arg-392 form the GMPS ATP-PPase domain. Ser-230–Ser-236 contacts ATP.

In terms of assembly, homodimer.

It carries out the reaction XMP + L-glutamine + ATP + H2O = GMP + L-glutamate + AMP + diphosphate + 2 H(+). It participates in purine metabolism; GMP biosynthesis; GMP from XMP (L-Gln route): step 1/1. Functionally, catalyzes the synthesis of GMP from XMP. The chain is GMP synthase [glutamine-hydrolyzing] from Lactobacillus johnsonii (strain CNCM I-12250 / La1 / NCC 533).